Consider the following 248-residue polypeptide: Triosephosphate isomerase (248 aa).

Residue Lys-12 participates in substrate binding. His-94 acts as the Electrophile in catalysis. The active-site Proton acceptor is Glu-165.

This sequence belongs to the triosephosphate isomerase family. In terms of assembly, homodimer.

It carries out the reaction D-glyceraldehyde 3-phosphate = dihydroxyacetone phosphate. Its pathway is carbohydrate biosynthesis; gluconeogenesis. The protein operates within carbohydrate degradation; glycolysis; D-glyceraldehyde 3-phosphate from glycerone phosphate: step 1/1. This is Triosephosphate isomerase (Tpi) from Bombyx mori (Silk moth).